The primary structure comprises 648 residues: Mitochondrial Rho GTPase 1 (648 aa).

Over 1–619 (MARYAAGAVD…KHYNRLINRS (619 aa)) the chain is Cytoplasmic. The residue at position 14 (serine 14) is a Phosphoserine. Residues 15 to 182 (PKSVRIVVVG…FYYAQKTVLH (168 aa)) enclose the Miro 1 domain. EF-hand domains follow at residues 198–233 (RCVR…CFHA) and 319–354 (AAID…APES). Positions 211, 213, 215, 222, 332, 334, 336, 338, and 343 each coordinate Ca(2+). The Miro 2 domain maps to 427–595 (RKVFQCFVFG…FRKILTAAQH (169 aa)). The helical transmembrane segment at 620–640 (LMAVSIGAAAVVVGLAAYRVY) threads the bilayer. Topologically, residues 641–648 (ATRKSSSA) are mitochondrial intermembrane.

Belongs to the mitochondrial Rho GTPase family. As to expression, expressed in roots, leaves, stems, flowers and siliques.

Its subcellular location is the mitochondrion outer membrane. In terms of biological role, mitochondrial GTPase required to maintain proper development, morphology and intracellular distribution of mitochondria, which in turn are essential for the progress of embryonic cell division, development of haploid male and female gametes, and pollen tube growth. This Arabidopsis thaliana (Mouse-ear cress) protein is Mitochondrial Rho GTPase 1.